Reading from the N-terminus, the 309-residue chain is Homoserine kinase (309 aa).

91 to 101 (PIGSGLGSSAC) provides a ligand contact to ATP.

This sequence belongs to the GHMP kinase family. Homoserine kinase subfamily.

The protein resides in the cytoplasm. It catalyses the reaction L-homoserine + ATP = O-phospho-L-homoserine + ADP + H(+). The protein operates within amino-acid biosynthesis; L-threonine biosynthesis; L-threonine from L-aspartate: step 4/5. Catalyzes the ATP-dependent phosphorylation of L-homoserine to L-homoserine phosphate. This Edwardsiella ictaluri (strain 93-146) protein is Homoserine kinase.